Reading from the N-terminus, the 210-residue chain is Dephospho-CoA kinase (210 aa).

Positions 4 to 201 constitute a DPCK domain; it reads IVALTGGICS…NFYIYLSKQN (198 aa). An ATP-binding site is contributed by 12-17; sequence CSGKTT.

Belongs to the CoaE family.

The protein resides in the cytoplasm. The catalysed reaction is 3'-dephospho-CoA + ATP = ADP + CoA + H(+). It participates in cofactor biosynthesis; coenzyme A biosynthesis; CoA from (R)-pantothenate: step 5/5. In terms of biological role, catalyzes the phosphorylation of the 3'-hydroxyl group of dephosphocoenzyme A to form coenzyme A. In Buchnera aphidicola subsp. Schizaphis graminum (strain Sg), this protein is Dephospho-CoA kinase.